A 97-amino-acid polypeptide reads, in one-letter code: Large ribosomal subunit protein bL27 (97 aa).

The propeptide occupies 1 to 12; sequence MLKMNLANLQLF. The disordered stretch occupies residues 14–37; the sequence is HKKGGGSTSNGRDSQAKRLGAKAA.

The protein belongs to the bacterial ribosomal protein bL27 family. The N-terminus is cleaved by ribosomal processing cysteine protease Prp.

This Streptococcus gordonii (strain Challis / ATCC 35105 / BCRC 15272 / CH1 / DL1 / V288) protein is Large ribosomal subunit protein bL27.